Consider the following 504-residue polypeptide: Maturase K (504 aa).

The protein belongs to the intron maturase 2 family. MatK subfamily.

It localises to the plastid. It is found in the chloroplast. In terms of biological role, usually encoded in the trnK tRNA gene intron. Probably assists in splicing its own and other chloroplast group II introns. The sequence is that of Maturase K from Betula papyrifera (Paper birch).